The chain runs to 629 residues: Microtubule-associated protein 70-3 (629 aa).

Residues 1 to 54 (MEEGGYAFEVNNGRPTASEFGTTARISSPSLTMSSSFREGGGGGGSKGLTRRRS) are disordered. The segment covering 13–33 (GRPTASEFGTTARISSPSLTM) has biased composition (polar residues). A coiled-coil region spans residues 75 to 375 (VKVELNRLEN…ADRAAKSEAQ (301 aa)). Positions 257 to 493 (ILDKLHRQKV…FPLNQSSEGT (237 aa)) are required for targeting to microtubules. Disordered stretches follow at residues 391 to 421 (LRGP…LGGA), 458 to 519 (GTSR…DSVP), and 578 to 629 (AMEK…RSTQ). Residues 393–416 (GPSSSGNRSTPEGRSMSNGPSRRQ) show a composition bias toward polar residues. Residues 544-592 (LRDKDEAIEMLAKKVETLTKAMEVEAKKMRREVAAMEKEVSAMRVDNKG) adopt a coiled-coil conformation. The span at 578 to 596 (AMEKEVSAMRVDNKGSDSR) shows a compositional bias: basic and acidic residues. A compositionally biased stretch (polar residues) spans 603-613 (NSKGASTTAQL).

Belongs to the MAP70 family.

Its subcellular location is the cytoplasm. It localises to the cytoskeleton. Plant-specific protein that interact with microtubules. The chain is Microtubule-associated protein 70-3 (MAP70.3) from Arabidopsis thaliana (Mouse-ear cress).